The primary structure comprises 721 residues: K(+)-insensitive pyrophosphate-energized proton pump (721 aa).

Transmembrane regions (helical) follow at residues 8 to 28, 57 to 77, 82 to 102, 136 to 156, and 168 to 188; these read LLGV…AVWV, YRTL…AIDM, FGLT…AGYL, VMGL…YLVF, and LVAL…GGGI. K191 provides a ligand contact to substrate. Residues D194, D198, N221, and D224 each contribute to the Mg(2+) site. 5 helical membrane passes run 247-267, 294-314, 323-343, 374-394, and 416-436; these read AIFL…IILF, ISLA…IGAF, ALAL…IVKI, YGVG…VLGI, and AGIF…GIII. D446 contributes to the Mg(2+) binding site. 4 consecutive transmembrane segments (helical) span residues 483-503, 527-547, 599-619, and 621-641; these read AIAS…FEIV, LINA…YFFS, FLIP…LLGW, and ALAG…LLMA. D648, D672, and D676 together coordinate Ca(2+). K679 provides a ligand contact to substrate. The chain crosses the membrane as a helical span at residues 698-718; it reads VVFTYVIVSTNIALGIWPSGL.

It belongs to the H(+)-translocating pyrophosphatase (TC 3.A.10) family. K(+)-insensitive subfamily. As to quaternary structure, homodimer. Requires Mg(2+) as cofactor.

It localises to the cell membrane. It catalyses the reaction diphosphate + H2O + H(+)(in) = 2 phosphate + 2 H(+)(out). In terms of biological role, proton pump that utilizes the energy of pyrophosphate hydrolysis as the driving force for proton movement across the membrane. Generates a proton motive force. This Pyrobaculum aerophilum (strain ATCC 51768 / DSM 7523 / JCM 9630 / CIP 104966 / NBRC 100827 / IM2) protein is K(+)-insensitive pyrophosphate-energized proton pump.